Here is an 884-residue protein sequence, read N- to C-terminus: Alanine--tRNA ligase (884 aa).

Zn(2+) contacts are provided by His574, His578, Cys675, and His679.

This sequence belongs to the class-II aminoacyl-tRNA synthetase family. Zn(2+) is required as a cofactor.

It is found in the cytoplasm. It catalyses the reaction tRNA(Ala) + L-alanine + ATP = L-alanyl-tRNA(Ala) + AMP + diphosphate. Functionally, catalyzes the attachment of alanine to tRNA(Ala) in a two-step reaction: alanine is first activated by ATP to form Ala-AMP and then transferred to the acceptor end of tRNA(Ala). Also edits incorrectly charged Ser-tRNA(Ala) and Gly-tRNA(Ala) via its editing domain. In Ralstonia nicotianae (strain ATCC BAA-1114 / GMI1000) (Ralstonia solanacearum), this protein is Alanine--tRNA ligase.